A 337-amino-acid polypeptide reads, in one-letter code: Heme A synthase (337 aa).

Helical transmembrane passes span 6 to 26 (ITKW…IGGI), 87 to 107 (FIHR…LIYF), 119 to 139 (LPYI…WYMV), 154 to 174 (LAFH…QLIK), and 192 to 212 (LIFS…GALV). Histidine 256 provides a ligand contact to heme. A run of 3 helical transmembrane segments spans residues 258–278 (LVGY…LKIE), 285–305 (IAYF…LTLL), and 308–328 (VPII…SIII). Histidine 316 is a binding site for heme.

Belongs to the COX15/CtaA family. Type 2 subfamily. In terms of assembly, interacts with CtaB. Heme b serves as cofactor.

The protein localises to the cell membrane. The enzyme catalyses Fe(II)-heme o + 2 A + H2O = Fe(II)-heme a + 2 AH2. It participates in porphyrin-containing compound metabolism; heme A biosynthesis; heme A from heme O: step 1/1. Catalyzes the conversion of heme O to heme A by two successive hydroxylations of the methyl group at C8. The first hydroxylation forms heme I, the second hydroxylation results in an unstable dihydroxymethyl group, which spontaneously dehydrates, resulting in the formyl group of heme A. The protein is Heme A synthase of Rickettsia conorii (strain ATCC VR-613 / Malish 7).